The chain runs to 845 residues: Protein translocase subunit SecA (845 aa).

Residues glutamine 88, 106 to 110 (GEGKT), and aspartate 495 each bind ATP. A disordered region spans residues 804-838 (SNRANRPQKKAKRQPIVKPDKPGRNDPCPCGSGKK). Residues 809-818 (RPQKKAKRQP) show a composition bias toward basic residues. Cysteine 831, cysteine 833, cysteine 842, and cysteine 843 together coordinate Zn(2+).

The protein belongs to the SecA family. As to quaternary structure, monomer and homodimer. Part of the essential Sec protein translocation apparatus which comprises SecA, SecYEG and auxiliary proteins SecDF. Other proteins may also be involved. The cofactor is Zn(2+).

Its subcellular location is the cell inner membrane. The protein localises to the cytoplasm. The catalysed reaction is ATP + H2O + cellular proteinSide 1 = ADP + phosphate + cellular proteinSide 2.. Functionally, part of the Sec protein translocase complex. Interacts with the SecYEG preprotein conducting channel. Has a central role in coupling the hydrolysis of ATP to the transfer of proteins into and across the cell membrane, serving as an ATP-driven molecular motor driving the stepwise translocation of polypeptide chains across the membrane. The sequence is that of Protein translocase subunit SecA from Halothermothrix orenii (strain H 168 / OCM 544 / DSM 9562).